Consider the following 322-residue polypeptide: Agmatinase (322 aa).

The Mn(2+) site is built by His-136, Asp-160, His-162, Asp-164, Asp-243, and Asp-245.

The protein belongs to the arginase family. Agmatinase subfamily. Mn(2+) is required as a cofactor.

It catalyses the reaction agmatine + H2O = urea + putrescine. Its pathway is amine and polyamine biosynthesis; putrescine biosynthesis via agmatine pathway; putrescine from agmatine: step 1/1. Its function is as follows. Catalyzes the formation of putrescine from agmatine. The chain is Agmatinase from Chromobacterium violaceum (strain ATCC 12472 / DSM 30191 / JCM 1249 / CCUG 213 / NBRC 12614 / NCIMB 9131 / NCTC 9757 / MK).